A 182-amino-acid chain; its full sequence is Bifunctional protein PyrR (182 aa).

The PRPP-binding motif lies at Val99–Thr111.

It belongs to the purine/pyrimidine phosphoribosyltransferase family. PyrR subfamily. Homodimer and homohexamer; in equilibrium.

The enzyme catalyses UMP + diphosphate = 5-phospho-alpha-D-ribose 1-diphosphate + uracil. Functionally, regulates transcriptional attenuation of the pyrimidine nucleotide (pyr) operon by binding in a uridine-dependent manner to specific sites on pyr mRNA. This disrupts an antiterminator hairpin in the RNA and favors formation of a downstream transcription terminator, leading to a reduced expression of downstream genes. Also displays a weak uracil phosphoribosyltransferase activity which is not physiologically significant. The protein is Bifunctional protein PyrR of Alkaliphilus metalliredigens (strain QYMF).